Consider the following 297-residue polypeptide: Small ribosomal subunit biogenesis GTPase RsgA (297 aa).

One can recognise a CP-type G domain in the interval 65-223; that stretch reads INEIGRPAVA…IADTPGFSAI (159 aa). GTP contacts are provided by residues 114 to 117 and 166 to 174; these read SKSD and GQSGAGKST. Residues Cys-247, Cys-252, His-254, and Cys-260 each coordinate Zn(2+).

It belongs to the TRAFAC class YlqF/YawG GTPase family. RsgA subfamily. Monomer. Associates with 30S ribosomal subunit, binds 16S rRNA. The cofactor is Zn(2+).

The protein localises to the cytoplasm. In terms of biological role, one of several proteins that assist in the late maturation steps of the functional core of the 30S ribosomal subunit. Helps release RbfA from mature subunits. May play a role in the assembly of ribosomal proteins into the subunit. Circularly permuted GTPase that catalyzes slow GTP hydrolysis, GTPase activity is stimulated by the 30S ribosomal subunit. The protein is Small ribosomal subunit biogenesis GTPase RsgA of Lactobacillus johnsonii (strain CNCM I-12250 / La1 / NCC 533).